A 119-amino-acid chain; its full sequence is Ribonuclease P protein component (119 aa).

Belongs to the RnpA family. In terms of assembly, consists of a catalytic RNA component (M1 or rnpB) and a protein subunit.

The enzyme catalyses Endonucleolytic cleavage of RNA, removing 5'-extranucleotides from tRNA precursor.. Its function is as follows. RNaseP catalyzes the removal of the 5'-leader sequence from pre-tRNA to produce the mature 5'-terminus. It can also cleave other RNA substrates such as 4.5S RNA. The protein component plays an auxiliary but essential role in vivo by binding to the 5'-leader sequence and broadening the substrate specificity of the ribozyme. This Syntrophus aciditrophicus (strain SB) protein is Ribonuclease P protein component.